Consider the following 264-residue polypeptide: Thymidylate synthase (264 aa).

DUMP is bound at residue arginine 21. Histidine 51 contributes to the (6R)-5,10-methylene-5,6,7,8-tetrahydrofolate binding site. A dUMP-binding site is contributed by 126–127 (RR). Catalysis depends on cysteine 146, which acts as the Nucleophile. DUMP contacts are provided by residues 166–169 (RSGD), asparagine 177, and 207–209 (HLY). Residue aspartate 169 coordinates (6R)-5,10-methylene-5,6,7,8-tetrahydrofolate. Residue alanine 263 coordinates (6R)-5,10-methylene-5,6,7,8-tetrahydrofolate.

This sequence belongs to the thymidylate synthase family. Bacterial-type ThyA subfamily. Homodimer.

It is found in the cytoplasm. The enzyme catalyses dUMP + (6R)-5,10-methylene-5,6,7,8-tetrahydrofolate = 7,8-dihydrofolate + dTMP. The protein operates within pyrimidine metabolism; dTTP biosynthesis. In terms of biological role, catalyzes the reductive methylation of 2'-deoxyuridine-5'-monophosphate (dUMP) to 2'-deoxythymidine-5'-monophosphate (dTMP) while utilizing 5,10-methylenetetrahydrofolate (mTHF) as the methyl donor and reductant in the reaction, yielding dihydrofolate (DHF) as a by-product. This enzymatic reaction provides an intracellular de novo source of dTMP, an essential precursor for DNA biosynthesis. The sequence is that of Thymidylate synthase from Xanthomonas axonopodis pv. citri (strain 306).